Reading from the N-terminus, the 404-residue chain is S-adenosylmethionine synthase (404 aa).

Polar residues predominate over residues 1 to 13 (MSQSRYFFTSESV). The segment at 1–21 (MSQSRYFFTSESVSEGHPDKV) is disordered. Position 17 (H17) interacts with ATP. D19 is a binding site for Mg(2+). E45 contributes to the K(+) binding site. Residues E58 and Q101 each coordinate L-methionine. Positions 101 to 111 (QSPDINRGVDR) are flexible loop. ATP-binding positions include 172 to 174 (DAK), 245 to 246 (RF), D254, 260 to 261 (RK), A277, and K281. D254 provides a ligand contact to L-methionine. K285 provides a ligand contact to L-methionine.

This sequence belongs to the AdoMet synthase family. Homotetramer; dimer of dimers. Mg(2+) serves as cofactor. K(+) is required as a cofactor.

It is found in the cytoplasm. The catalysed reaction is L-methionine + ATP + H2O = S-adenosyl-L-methionine + phosphate + diphosphate. The protein operates within amino-acid biosynthesis; S-adenosyl-L-methionine biosynthesis; S-adenosyl-L-methionine from L-methionine: step 1/1. In terms of biological role, catalyzes the formation of S-adenosylmethionine (AdoMet) from methionine and ATP. The overall synthetic reaction is composed of two sequential steps, AdoMet formation and the subsequent tripolyphosphate hydrolysis which occurs prior to release of AdoMet from the enzyme. This chain is S-adenosylmethionine synthase, found in Chlorobium phaeobacteroides (strain DSM 266 / SMG 266 / 2430).